We begin with the raw amino-acid sequence, 158 residues long: NAD(P)H-quinone oxidoreductase subunit J, chloroplastic (158 aa).

Belongs to the complex I 30 kDa subunit family. In terms of assembly, NDH is composed of at least 16 different subunits, 5 of which are encoded in the nucleus.

Its subcellular location is the plastid. The protein resides in the chloroplast thylakoid membrane. It catalyses the reaction a plastoquinone + NADH + (n+1) H(+)(in) = a plastoquinol + NAD(+) + n H(+)(out). The enzyme catalyses a plastoquinone + NADPH + (n+1) H(+)(in) = a plastoquinol + NADP(+) + n H(+)(out). NDH shuttles electrons from NAD(P)H:plastoquinone, via FMN and iron-sulfur (Fe-S) centers, to quinones in the photosynthetic chain and possibly in a chloroplast respiratory chain. The immediate electron acceptor for the enzyme in this species is believed to be plastoquinone. Couples the redox reaction to proton translocation, and thus conserves the redox energy in a proton gradient. This Liriodendron tulipifera (Tuliptree) protein is NAD(P)H-quinone oxidoreductase subunit J, chloroplastic.